The sequence spans 117 residues: Ig heavy chain V region RF (117 aa).

Positions 1 to 19 (MNFGLRLIFLVLVLKGVLC) are cleaved as a signal peptide. Residues 20–49 (DVKLVESGGGLVKLGGSLKLSCAASGFTFS) form a framework-1 region. A disulfide bridge links Cys-41 with Cys-115. The interval 50–54 (SYYMS) is complementarity-determining-1. The framework-2 stretch occupies residues 55–68 (WVRQTPEKRLELVA). A complementarity-determining-2 region spans residues 69–85 (AINSNGGSTYYPDTVKG). The framework-3 stretch occupies residues 86-117 (RFTISRDNAKNTLYLQMSSLKSEDTALYYCAR).

This is Ig heavy chain V region RF from Mus musculus (Mouse).